Reading from the N-terminus, the 295-residue chain is Acetylglutamate kinase (295 aa).

Residues 70–71 (GG), R92, and N191 contribute to the substrate site.

This sequence belongs to the acetylglutamate kinase family. ArgB subfamily.

The protein localises to the cytoplasm. It catalyses the reaction N-acetyl-L-glutamate + ATP = N-acetyl-L-glutamyl 5-phosphate + ADP. It participates in amino-acid biosynthesis; L-arginine biosynthesis; N(2)-acetyl-L-ornithine from L-glutamate: step 2/4. Its function is as follows. Catalyzes the ATP-dependent phosphorylation of N-acetyl-L-glutamate. The sequence is that of Acetylglutamate kinase from Mycobacterium avium (strain 104).